The sequence spans 365 residues: Ribosomal RNA large subunit methyltransferase F (365 aa).

A disordered region spans residues 1–49; sequence MSKPAVKSVQSATAKTATRAVNIRQKVKAPKQAKPEAKGRVRPSKDKPR. Residues 33-49 are compositionally biased toward basic and acidic residues; it reads AKPEAKGRVRPSKDKPR.

The protein belongs to the methyltransferase superfamily. METTL16/RlmF family.

The protein localises to the cytoplasm. It carries out the reaction adenosine(1618) in 23S rRNA + S-adenosyl-L-methionine = N(6)-methyladenosine(1618) in 23S rRNA + S-adenosyl-L-homocysteine + H(+). Specifically methylates the adenine in position 1618 of 23S rRNA. This Shewanella baltica (strain OS185) protein is Ribosomal RNA large subunit methyltransferase F.